A 265-amino-acid polypeptide reads, in one-letter code: Glutamate racemase (265 aa).

Residues 12-13 (DS) and 44-45 (YG) contribute to the substrate site. Cysteine 75 functions as the Proton donor/acceptor in the catalytic mechanism. 76-77 (NT) contacts substrate. Residue cysteine 186 is the Proton donor/acceptor of the active site. 187-188 (TH) contributes to the substrate binding site.

Belongs to the aspartate/glutamate racemases family.

The catalysed reaction is L-glutamate = D-glutamate. The protein operates within cell wall biogenesis; peptidoglycan biosynthesis. Provides the (R)-glutamate required for cell wall biosynthesis. This chain is Glutamate racemase, found in Pseudomonas entomophila (strain L48).